The sequence spans 208 residues: Uracil phosphoribosyltransferase (208 aa).

5-phospho-alpha-D-ribose 1-diphosphate-binding positions include R78, R103, and 130 to 138 (DPMLATGGS). Uracil is bound by residues I193 and 198-200 (GDA). D199 is a binding site for 5-phospho-alpha-D-ribose 1-diphosphate.

It belongs to the UPRTase family. It depends on Mg(2+) as a cofactor.

It carries out the reaction UMP + diphosphate = 5-phospho-alpha-D-ribose 1-diphosphate + uracil. Its pathway is pyrimidine metabolism; UMP biosynthesis via salvage pathway; UMP from uracil: step 1/1. Its activity is regulated as follows. Allosterically activated by GTP. Functionally, catalyzes the conversion of uracil and 5-phospho-alpha-D-ribose 1-diphosphate (PRPP) to UMP and diphosphate. This is Uracil phosphoribosyltransferase from Histophilus somni (strain 129Pt) (Haemophilus somnus).